A 319-amino-acid chain; its full sequence is Thioredoxin reductase 1 (319 aa).

FAD-binding positions include serine 11–alanine 14, isoleucine 40–alanine 41, glutamine 45, asparagine 54, valine 87, cysteine 145, aspartate 288, and arginine 295–alanine 297. A disulfide bridge connects residues cysteine 142 and cysteine 145. Serine 303 is modified (phosphoserine).

The protein belongs to the class-II pyridine nucleotide-disulfide oxidoreductase family. As to quaternary structure, homodimer. FAD is required as a cofactor.

The protein resides in the cytoplasm. The protein localises to the mitochondrion intermembrane space. The catalysed reaction is [thioredoxin]-dithiol + NADP(+) = [thioredoxin]-disulfide + NADPH + H(+). Central component in the thioredoxin system. Reduces thioredoxins 1 and 2. This is Thioredoxin reductase 1 (TRR1) from Saccharomyces cerevisiae (strain ATCC 204508 / S288c) (Baker's yeast).